Reading from the N-terminus, the 238-residue chain is Ribosomal RNA small subunit methyltransferase G (238 aa).

S-adenosyl-L-methionine-binding positions include Gly-77, Phe-82, 128–129, and Arg-147; that span reads AE.

It belongs to the methyltransferase superfamily. RNA methyltransferase RsmG family.

It is found in the cytoplasm. In terms of biological role, specifically methylates the N7 position of guanine in position 535 of 16S rRNA. The protein is Ribosomal RNA small subunit methyltransferase G of Listeria monocytogenes serotype 4b (strain F2365).